Here is a 185-residue protein sequence, read N- to C-terminus: MIAAGDFRKGVTIEVDGQIFTVVDFMHVKPGKGAAFVRTKLKNIMTGAVIERTFSPTEKFEEAQIERREMQYLYNDGEFYYFMDTETYEQIPLSYDKVEEAMKYIKENMIVTVKFYKGEAFSVEPPTFVELEVIDTEPGVRGDTVTGGSKPATVETGAVIQVPLFINVGDKIKIDTRTGEYIERV.

This sequence belongs to the elongation factor P family.

The protein resides in the cytoplasm. The protein operates within protein biosynthesis; polypeptide chain elongation. In terms of biological role, involved in peptide bond synthesis. Stimulates efficient translation and peptide-bond synthesis on native or reconstituted 70S ribosomes in vitro. Probably functions indirectly by altering the affinity of the ribosome for aminoacyl-tRNA, thus increasing their reactivity as acceptors for peptidyl transferase. The polypeptide is Elongation factor P (Caldanaerobacter subterraneus subsp. tengcongensis (strain DSM 15242 / JCM 11007 / NBRC 100824 / MB4) (Thermoanaerobacter tengcongensis)).